Reading from the N-terminus, the 151-residue chain is Phosphopantetheine adenylyltransferase (151 aa).

Thr9 is a substrate binding site. Residues 9-10 (TF) and His17 contribute to the ATP site. Substrate is bound by residues Lys41, Thr73, and Arg87. ATP contacts are provided by residues 88 to 90 (GIR), Glu98, and 122 to 128 (LTSISST).

Belongs to the bacterial CoaD family. In terms of assembly, homohexamer. The cofactor is Mg(2+).

The protein localises to the cytoplasm. The enzyme catalyses (R)-4'-phosphopantetheine + ATP + H(+) = 3'-dephospho-CoA + diphosphate. Its pathway is cofactor biosynthesis; coenzyme A biosynthesis; CoA from (R)-pantothenate: step 4/5. Its function is as follows. Reversibly transfers an adenylyl group from ATP to 4'-phosphopantetheine, yielding dephospho-CoA (dPCoA) and pyrophosphate. This chain is Phosphopantetheine adenylyltransferase, found in Phocaeicola vulgatus (strain ATCC 8482 / DSM 1447 / JCM 5826 / CCUG 4940 / NBRC 14291 / NCTC 11154) (Bacteroides vulgatus).